Consider the following 123-residue polypeptide: Protein Rev (123 aa).

At Ser5 the chain carries Phosphoserine; by host CK2. The interval 18 to 26 is homomultimerization; that stretch reads IIKTLYQSN. Disordered regions lie at residues 24–50 and 79–123; these read QSNP…ARQR and EGLS…GTKE. The Nuclear localization signal and RNA-binding (RRE) motif lies at 34–50; that stretch reads TRQARKNRRRRWRARQR. Residues 36–50 are compositionally biased toward basic residues; it reads QARKNRRRRWRARQR. Residues 73-84 carry the Nuclear export signal and binding to XPO1 motif; it reads FQLPPLEGLSLD. Ser92 is modified (phosphoserine; by host). The segment covering 93–105 has biased composition (low complexity); that stretch reads GTQQPQGTETGVG.

It belongs to the HIV-1 REV protein family. Homomultimer; when bound to the RRE. Multimeric assembly is essential for activity and may involve XPO1. Binds to human KPNB1, XPO1, TNPO1, RANBP5 and IPO7. Interacts with the viral Integrase. Interacts with human KHDRBS1. Interacts with human NAP1; this interaction decreases Rev multimerization and stimulates its activity. Interacts with human DEAD-box helicases DDX3 and DDX24; these interactions may serve for viral RNA export to the cytoplasm and packaging, respectively. Interacts with human PSIP1; this interaction may inhibit HIV-1 DNA integration by promoting dissociation of the Integrase-LEDGF/p75 complex. Asymmetrically arginine dimethylated at one site by host PRMT6. Methylation impairs the RNA-binding activity and export of viral RNA from the nucleus to the cytoplasm. In terms of processing, phosphorylated by protein kinase CK2. Presence of, and maybe binding to the N-terminus of the regulatory beta subunit of CK2 is necessary for CK2-mediated Rev's phosphorylation.

It localises to the host nucleus. Its subcellular location is the host nucleolus. The protein localises to the host cytoplasm. Its function is as follows. Escorts unspliced or incompletely spliced viral pre-mRNAs (late transcripts) out of the nucleus of infected cells. These pre-mRNAs carry a recognition sequence called Rev responsive element (RRE) located in the env gene, that is not present in fully spliced viral mRNAs (early transcripts). This function is essential since most viral proteins are translated from unspliced or partially spliced pre-mRNAs which cannot exit the nucleus by the pathway used by fully processed cellular mRNAs. Rev itself is translated from a fully spliced mRNA that readily exits the nucleus. Rev's nuclear localization signal (NLS) binds directly to KPNB1/Importin beta-1 without previous binding to KPNA1/Importin alpha-1. KPNB1 binds to the GDP bound form of RAN (Ran-GDP) and targets Rev to the nucleus. In the nucleus, the conversion from Ran-GDP to Ran-GTP dissociates Rev from KPNB1 and allows Rev's binding to the RRE in viral pre-mRNAs. Rev multimerization on the RRE via cooperative assembly exposes its nuclear export signal (NES) to the surface. Rev can then form a complex with XPO1/CRM1 and Ran-GTP, leading to nuclear export of the complex. Conversion from Ran-GTP to Ran-GDP mediates dissociation of the Rev/RRE/XPO1/RAN complex, so that Rev can return to the nucleus for a subsequent round of export. Beside KPNB1, also seems to interact with TNPO1/Transportin-1, RANBP5/IPO5 and IPO7/RANBP7 for nuclear import. The nucleoporin-like HRB/RIP is an essential cofactor that probably indirectly interacts with Rev to release HIV RNAs from the perinuclear region to the cytoplasm. This is Protein Rev from Human immunodeficiency virus type 1 group M subtype G (isolate 92NG083) (HIV-1).